The primary structure comprises 343 residues: N-acetyl-gamma-glutamyl-phosphate reductase (343 aa).

Cysteine 147 is a catalytic residue.

This sequence belongs to the NAGSA dehydrogenase family. Type 1 subfamily.

The protein resides in the cytoplasm. The enzyme catalyses N-acetyl-L-glutamate 5-semialdehyde + phosphate + NADP(+) = N-acetyl-L-glutamyl 5-phosphate + NADPH + H(+). The protein operates within amino-acid biosynthesis; L-arginine biosynthesis; N(2)-acetyl-L-ornithine from L-glutamate: step 3/4. Functionally, catalyzes the NADPH-dependent reduction of N-acetyl-5-glutamyl phosphate to yield N-acetyl-L-glutamate 5-semialdehyde. This is N-acetyl-gamma-glutamyl-phosphate reductase from Listeria innocua serovar 6a (strain ATCC BAA-680 / CLIP 11262).